The following is a 589-amino-acid chain: MVSLQVSSLPQTLILAFLLPQALPAGVFELQIHSFGPGPGPGTPRSPCNARGPCRLFFRVCLKPGVSQEAAESLCALGAALSTSGPVYTEQPGVPAAALSLPDGLVRVPFLDAWPGTFSLIIETWREQLGERAAGPAWNLLARVAGRRRLAAGAPWARDVQRTGAWELHFSYRARCEPPAVGAACARLCRSRSAPSRCGPGLRPCTPFPDECEAPRESLTVCRAGCSPEHGYCEEPDECHCLEGWTGPLCTVPVSTSSCLNSRVSGPAGTGCLLPGPGPCDGNPCANGGSCSETPGSFECACPRGFYGPRCEVSGVTCADGPCFNGGLCVGGEDPDSAYVCHCPPAFQGSNCERRVDRCSLQPCQNGGLCLDLGHALRCRCRAGFAGPRCEHDLDDCAGRACANGGTCVEGGGARRCSCALGFGGRDCRERADPCASRPCAHGGRCYAHFSGLVCACAPGYMGVRCEFAVRPDGADAVPAAPRGLRQADSQRFLLPPALGLLAAAALAGAALLLIHVRRRGPGRDTGTRLLSGTREPSVHTLPDALNNLRLQDGAGDGPTSSADWNHPEDGDSRSIYVIPAPSIYAREA.

The first 32 residues, 1-32 (MVSLQVSSLPQTLILAFLLPQALPAGVFELQI), serve as a signal peptide directing secretion. Topologically, residues 33–494 (HSFGPGPGPG…LRQADSQRFL (462 aa)) are extracellular. The 40-residue stretch at 174-213 (ARCEPPAVGAACARLCRSRSAPSRCGPGLRPCTPFPDECE) folds into the DSL domain. 6 EGF-like domains span residues 218–251 (SLTVCRAGCSPEHGYCEEPDECHCLEGWTGPLCT), 276–312 (GPGPCDGNPCANGGSCSETPGSFECACPRGFYGPRCE), 314–353 (SGVTCADGPCFNGGLCVGGEDPDSAYVCHCPPAFQGSNCE), 355–391 (RVDRCSLQPCQNGGLCLDLGHALRCRCRAGFAGPRCE), 393–429 (DLDDCAGRACANGGTCVEGGGARRCSCALGFGGRDCR), and 431–467 (RADPCASRPCAHGGRCYAHFSGLVCACAPGYMGVRCE). 18 cysteine pairs are disulfide-bonded: Cys-222–Cys-233, Cys-226–Cys-239, Cys-241–Cys-250, Cys-280–Cys-291, Cys-285–Cys-300, Cys-302–Cys-311, Cys-318–Cys-329, Cys-323–Cys-341, Cys-343–Cys-352, Cys-359–Cys-370, Cys-364–Cys-379, Cys-381–Cys-390, Cys-397–Cys-408, Cys-402–Cys-417, Cys-419–Cys-428, Cys-435–Cys-446, Cys-440–Cys-455, and Cys-457–Cys-466. Residues 495–515 (LPPALGLLAAAALAGAALLLI) form a helical membrane-spanning segment. At 516–589 (HVRRRGPGRD…PAPSIYAREA (74 aa)) the chain is on the cytoplasmic side. The interval 552–574 (QDGAGDGPTSSADWNHPEDGDSR) is disordered.

Can bind and activate Notch-1 or another Notch receptor. Post-translationally, ubiquitinated by MIB (MIB1 or MIB2), leading to its endocytosis and subsequent degradation.

It is found in the membrane. Inhibits primary neurogenesis. May be required to divert neurons along a specific differentiation pathway. Plays a role in the formation of somite boundaries during segmentation of the paraxial mesoderm. The chain is Delta-like protein 3 (Dll3) from Rattus norvegicus (Rat).